The following is a 213-amino-acid chain: MARERQEMVVELKRYGISNARVLDAFLTVRRHLFVDAQSRPYAYSDNAMPIGFGQTISQPYTVAYMTSLLVERVPSGKVLEIGTGSGYQAAILAELGYRVYTIERIAGLYAAAGRVLDALGLPVHPRLGDGTLGWPEEAPFDGIIVTAAAPREPHTLMSQLAEGGVLVVPIGDLGSQQMTVIRRRGERFEHEIFHNFAFVPLCGREGWADNNE.

The active site involves Ser-58.

This sequence belongs to the methyltransferase superfamily. L-isoaspartyl/D-aspartyl protein methyltransferase family.

The protein localises to the cytoplasm. The enzyme catalyses [protein]-L-isoaspartate + S-adenosyl-L-methionine = [protein]-L-isoaspartate alpha-methyl ester + S-adenosyl-L-homocysteine. In terms of biological role, catalyzes the methyl esterification of L-isoaspartyl residues in peptides and proteins that result from spontaneous decomposition of normal L-aspartyl and L-asparaginyl residues. It plays a role in the repair and/or degradation of damaged proteins. This is Protein-L-isoaspartate O-methyltransferase from Chlorobaculum tepidum (strain ATCC 49652 / DSM 12025 / NBRC 103806 / TLS) (Chlorobium tepidum).